Consider the following 184-residue polypeptide: ATP synthase subunit b (184 aa).

A helical transmembrane segment spans residues 15–34 (VQPGLIFWTLVTFVIAAVVL).

It belongs to the ATPase B chain family. As to quaternary structure, F-type ATPases have 2 components, F(1) - the catalytic core - and F(0) - the membrane proton channel. F(1) has five subunits: alpha(3), beta(3), gamma(1), delta(1), epsilon(1). F(0) has three main subunits: a(1), b(2) and c(10-14). The alpha and beta chains form an alternating ring which encloses part of the gamma chain. F(1) is attached to F(0) by a central stalk formed by the gamma and epsilon chains, while a peripheral stalk is formed by the delta and b chains.

It localises to the cell inner membrane. F(1)F(0) ATP synthase produces ATP from ADP in the presence of a proton or sodium gradient. F-type ATPases consist of two structural domains, F(1) containing the extramembraneous catalytic core and F(0) containing the membrane proton channel, linked together by a central stalk and a peripheral stalk. During catalysis, ATP synthesis in the catalytic domain of F(1) is coupled via a rotary mechanism of the central stalk subunits to proton translocation. Functionally, component of the F(0) channel, it forms part of the peripheral stalk, linking F(1) to F(0). The polypeptide is ATP synthase subunit b (Myxococcus xanthus (strain DK1622)).